The chain runs to 400 residues: S-adenosylmethionine decarboxylase proenzyme (400 aa).

Catalysis depends on residues E18 and E21. The Schiff-base intermediate with substrate; via pyruvic acid role is filled by S78. S78 bears the Pyruvic acid (Ser); by autocatalysis mark. The active-site Proton donor; for catalytic activity is the C92. Catalysis depends on proton acceptor; for processing activity residues S243 and H256.

It belongs to the eukaryotic AdoMetDC family. Requires pyruvate as cofactor. Post-translationally, is synthesized initially as an inactive proenzyme. Formation of the active enzyme involves a self-maturation process in which the active site pyruvoyl group is generated from an internal serine residue via an autocatalytic post-translational modification. Two non-identical subunits are generated from the proenzyme in this reaction, and the pyruvate is formed at the N-terminus of the alpha chain, which is derived from the carboxyl end of the proenzyme. The post-translation cleavage follows an unusual pathway, termed non-hydrolytic serinolysis, in which the side chain hydroxyl group of the serine supplies its oxygen atom to form the C-terminus of the beta chain, while the remainder of the serine residue undergoes an oxidative deamination to produce ammonia and the pyruvoyl group blocking the N-terminus of the alpha chain.

It carries out the reaction S-adenosyl-L-methionine + H(+) = S-adenosyl 3-(methylsulfanyl)propylamine + CO2. The protein operates within amine and polyamine biosynthesis; S-adenosylmethioninamine biosynthesis; S-adenosylmethioninamine from S-adenosyl-L-methionine: step 1/1. This chain is S-adenosylmethionine decarboxylase proenzyme (SAMDC), found in Zea mays (Maize).